The chain runs to 620 residues: Chaperone protein HscA homolog (620 aa).

It belongs to the heat shock protein 70 family.

Its function is as follows. Chaperone involved in the maturation of iron-sulfur cluster-containing proteins. Has a low intrinsic ATPase activity which is markedly stimulated by HscB. The sequence is that of Chaperone protein HscA homolog from Shewanella piezotolerans (strain WP3 / JCM 13877).